Reading from the N-terminus, the 159-residue chain is NADH-quinone oxidoreductase subunit B (159 aa).

[4Fe-4S] cluster is bound by residues cysteine 37, cysteine 38, cysteine 102, and cysteine 132.

The protein belongs to the complex I 20 kDa subunit family. As to quaternary structure, NDH-1 is composed of 14 different subunits. Subunits NuoB, C, D, E, F, and G constitute the peripheral sector of the complex. [4Fe-4S] cluster serves as cofactor.

It is found in the cell inner membrane. The enzyme catalyses a quinone + NADH + 5 H(+)(in) = a quinol + NAD(+) + 4 H(+)(out). In terms of biological role, NDH-1 shuttles electrons from NADH, via FMN and iron-sulfur (Fe-S) centers, to quinones in the respiratory chain. Couples the redox reaction to proton translocation (for every two electrons transferred, four hydrogen ions are translocated across the cytoplasmic membrane), and thus conserves the redox energy in a proton gradient. This is NADH-quinone oxidoreductase subunit B from Paraburkholderia phymatum (strain DSM 17167 / CIP 108236 / LMG 21445 / STM815) (Burkholderia phymatum).